Here is a 164-residue protein sequence, read N- to C-terminus: Type II secretion system protein M (164 aa).

Over 1–17 the chain is Cytoplasmic; sequence MNELRQRWQAMSQRERQ. The chain crosses the membrane as a helical span at residues 18–38; sequence LMVVCAAVLLLCVVYYAILQP. Topologically, residues 39–164 are periplasmic; it reads WQEREDLWER…RLMLERTDEA (126 aa).

Belongs to the GSP M family. Type II secretion system is composed of four main components: the outer membrane complex, the inner membrane complex, the cytoplasmic secretion ATPase and the periplasm-spanning pseudopilus. Forms homodimers. Interacts with OutL/GspL. Interacts with OutE/GspE and OutF/GspF.

The protein resides in the cell inner membrane. Inner membrane component of the type II secretion system required for the energy-dependent secretion of extracellular factors such as proteases and toxins from the periplasm. Plays a role in the complex assembly and recruits OutL resulting in a stable complex in the inner membrane. Provides thus a link between the energy-providing OutE protein in the cytoplasm and the rest of the T2SS machinery. The sequence is that of Type II secretion system protein M (outM) from Pectobacterium carotovorum subsp. carotovorum (Erwinia carotovora subsp. carotovora).